The primary structure comprises 431 residues: Gamma-glutamyl phosphate reductase (431 aa).

Belongs to the gamma-glutamyl phosphate reductase family.

The protein resides in the cytoplasm. It carries out the reaction L-glutamate 5-semialdehyde + phosphate + NADP(+) = L-glutamyl 5-phosphate + NADPH + H(+). It participates in amino-acid biosynthesis; L-proline biosynthesis; L-glutamate 5-semialdehyde from L-glutamate: step 2/2. Its function is as follows. Catalyzes the NADPH-dependent reduction of L-glutamate 5-phosphate into L-glutamate 5-semialdehyde and phosphate. The product spontaneously undergoes cyclization to form 1-pyrroline-5-carboxylate. This chain is Gamma-glutamyl phosphate reductase, found in Acaryochloris marina (strain MBIC 11017).